A 315-amino-acid chain; its full sequence is MPIKIPDQLPAAGVLTEENIFVMTDSRAAHQDIRPLKVLLLNLMPKKIETEIQLMRMLSNSPLQVLVDLLRIDDRESKNTPRIHVETFYQDFDQIKDNKYDGLIITGAPLGLVQFDDVVYWDTLIKIIEWSKKNVTSTLFLCWAAQAALKVLYGLEKQTRGEKLSGVYYHHKLEQQDPLVRGFDDVFLAPHSRYASFEGDFIRANTDLRIFAESEEAGVYLAATKDCRQVFVTGHPEYDAETLHHEYHRDLTAGINPNVPANYYPGNDPARPPYHSWRSHGHLLFSNWLNYYVYQLTPYDLDTLDQKAGGVDWEI.

Catalysis depends on C142, which acts as the Acyl-thioester intermediate. The substrate site is built by K163 and S192. H235 functions as the Proton acceptor in the catalytic mechanism. E237 is an active-site residue. R249 contacts substrate.

It belongs to the MetA family.

It is found in the cytoplasm. The catalysed reaction is L-homoserine + succinyl-CoA = O-succinyl-L-homoserine + CoA. It functions in the pathway amino-acid biosynthesis; L-methionine biosynthesis via de novo pathway; O-succinyl-L-homoserine from L-homoserine: step 1/1. Its function is as follows. Transfers a succinyl group from succinyl-CoA to L-homoserine, forming succinyl-L-homoserine. The sequence is that of Homoserine O-succinyltransferase from Tolumonas auensis (strain DSM 9187 / NBRC 110442 / TA 4).